The following is a 63-amino-acid chain: 2-hydroxymuconate tautomerase (63 aa).

The active-site Proton acceptor; via imino nitrogen is the Pro2.

This sequence belongs to the 4-oxalocrotonate tautomerase family. Homohexamer.

The enzyme catalyses (2Z,4E)-2-hydroxyhexa-2,4-dienedioate = (3E)-2-oxohex-3-enedioate. It participates in aromatic compound metabolism; salicylate degradation. Catalyzes the ketonization of 2-hydroxymuconate stereoselectively to yield 2-oxo-3-hexenedioate. The polypeptide is 2-hydroxymuconate tautomerase (tdnL) (Pseudomonas putida (Arthrobacter siderocapsulatus)).